The primary structure comprises 393 residues: Zinc finger CCHC domain-containing protein 18 (393 aa).

2 disordered regions span residues 281–300 (VEPE…RGTA) and 313–341 (DDFD…RTRK). 2 stretches are compositionally biased toward polar residues: residues 291–300 (PGASSLRGTA) and 320–331 (PSTSSGSGQRNN). A CCHC-type zinc finger spans residues 346–363 (IRCPHCGEEGHAKETCDN).

This sequence belongs to the ZCCHC12 family.

The chain is Zinc finger CCHC domain-containing protein 18 from Mus musculus (Mouse).